The sequence spans 379 residues: Armadillo repeat-containing X-linked protein 3 (379 aa).

Residues 1–6 are Mitochondrial intermembrane-facing; that stretch reads MGYARK. Mitochondrion outer membrane (MOM)-targeting sequence stretches follow at residues 1–6 and 26–37; these read MGYARK and RLTRGRKQNKEK. A helical; Signal-anchor transmembrane segment spans residues 7–29; it reads VGWVTAGLVIGAGACYCIYRLTR. The Cytoplasmic portion of the chain corresponds to 30-379; that stretch reads GRKQNKEKMA…TERMFPKSQE (350 aa). The tract at residues 34–69 is disordered; it reads NKEKMAEGGPGDVEDAGDCSGARYNDWSDDDDDSNE. Phosphoserine is present on residues Ser-61, Ser-67, and Ser-72. Residues 89-98 form a nuclear localization signal region; it reads RARARARARA. Ser-110 bears the Phosphoserine mark. ARM repeat units lie at residues 111–151, 153–192, and 233–272; these read PNSD…NNAA, AFNR…NLSV, and VTNE…NLAE.

The protein belongs to the eutherian X-chromosome-specific Armcx family. As to quaternary structure, interacts (via ARM domain) with MIRO1, MIRO2 and TRAK2. The interaction with Miro is calcium-dependent. Interacts with Sox10.

The protein resides in the mitochondrion outer membrane. It is found in the cytoplasm. The protein localises to the nucleus. In terms of biological role, regulates mitochondrial aggregation and transport in axons in living neurons. May link mitochondria to the Trak2-kinesin motor complex via its interaction with Miro and Trak2. Mitochondrial distribution and dynamics is regulated through Armcx3 protein degradation, which is promoted by PCK and negatively regulated by Wnt1. Enhances the Sox10-mediated transactivation of the neuronal acetylcholine receptor subunit alpha-3 and beta-4 subunit gene promoters. The chain is Armadillo repeat-containing X-linked protein 3 (Armcx3) from Rattus norvegicus (Rat).